Reading from the N-terminus, the 508-residue chain is Light-independent protochlorophyllide reductase subunit B (508 aa).

[4Fe-4S] cluster is bound at residue aspartate 36. Aspartate 294 acts as the Proton donor in catalysis. Position 429 to 430 (429 to 430 (GM)) interacts with substrate.

The protein belongs to the ChlB/BchB/BchZ family. In terms of assembly, protochlorophyllide reductase is composed of three subunits; ChlL, ChlN and ChlB. Forms a heterotetramer of two ChlB and two ChlN subunits. [4Fe-4S] cluster is required as a cofactor.

It carries out the reaction chlorophyllide a + oxidized 2[4Fe-4S]-[ferredoxin] + 2 ADP + 2 phosphate = protochlorophyllide a + reduced 2[4Fe-4S]-[ferredoxin] + 2 ATP + 2 H2O. It participates in porphyrin-containing compound metabolism; chlorophyll biosynthesis (light-independent). Component of the dark-operative protochlorophyllide reductase (DPOR) that uses Mg-ATP and reduced ferredoxin to reduce ring D of protochlorophyllide (Pchlide) to form chlorophyllide a (Chlide). This reaction is light-independent. The NB-protein (ChlN-ChlB) is the catalytic component of the complex. The polypeptide is Light-independent protochlorophyllide reductase subunit B (Synechococcus elongatus (strain ATCC 33912 / PCC 7942 / FACHB-805) (Anacystis nidulans R2)).